We begin with the raw amino-acid sequence, 160 residues long: RNA pyrophosphohydrolase (160 aa).

Positions 10–154 (PYRPCVGVML…KRDVYVAVLD (145 aa)) constitute a Nudix hydrolase domain. The Nudix box signature appears at 44–65 (GGVEKGEDPRAAALRELWEETG).

It belongs to the Nudix hydrolase family. RppH subfamily. The cofactor is a divalent metal cation.

In terms of biological role, accelerates the degradation of transcripts by removing pyrophosphate from the 5'-end of triphosphorylated RNA, leading to a more labile monophosphorylated state that can stimulate subsequent ribonuclease cleavage. This Roseobacter denitrificans (strain ATCC 33942 / OCh 114) (Erythrobacter sp. (strain OCh 114)) protein is RNA pyrophosphohydrolase.